The primary structure comprises 61 residues: Sperm protamine P1 (61 aa).

Residues 1-61 form a disordered region; the sequence is MARYRHSRSR…RYSRRRRRRY (61 aa).

It belongs to the protamine P1 family. As to expression, testis.

Its subcellular location is the nucleus. The protein localises to the chromosome. Protamines substitute for histones in the chromatin of sperm during the haploid phase of spermatogenesis. They compact sperm DNA into a highly condensed, stable and inactive complex. This chain is Sperm protamine P1 (PRM1), found in Onychogalea fraenata (Bridled nail-tailed wallaby).